The following is a 230-amino-acid chain: UPF0173 metal-dependent hydrolase LI0883 (230 aa).

The protein belongs to the UPF0173 family.

The sequence is that of UPF0173 metal-dependent hydrolase LI0883 from Lawsonia intracellularis (strain PHE/MN1-00).